The chain runs to 317 residues: Glutaminase (317 aa).

7 residues coordinate substrate: S67, N118, E162, N169, Y193, Y245, and V263.

It belongs to the glutaminase family. As to quaternary structure, homotetramer.

The catalysed reaction is L-glutamine + H2O = L-glutamate + NH4(+). The protein is Glutaminase of Brucella canis (strain ATCC 23365 / NCTC 10854 / RM-666).